The primary structure comprises 314 residues: Bis(5'-nucleosyl)-tetraphosphatase, symmetrical (314 aa).

The disordered stretch occupies residues 267 to 314 (QVPGNPITHPPKTAQRPRQPRRRQRQRGGDQAQTGPAPTPASTGPAGG). A compositionally biased stretch (low complexity) spans 297–314 (QAQTGPAPTPASTGPAGG).

It belongs to the Ap4A hydrolase family.

The enzyme catalyses P(1),P(4)-bis(5'-adenosyl) tetraphosphate + H2O = 2 ADP + 2 H(+). Its function is as follows. Hydrolyzes diadenosine 5',5'''-P1,P4-tetraphosphate to yield ADP. The protein is Bis(5'-nucleosyl)-tetraphosphatase, symmetrical of Xanthomonas axonopodis pv. citri (strain 306).